Reading from the N-terminus, the 25-residue chain is Caerin-1.7 (25 aa).

Position 25 is a leucine amide (Leu-25).

This sequence belongs to the frog skin active peptide (FSAP) family. Caerin subfamily. In terms of processing, caerin-1.7.1 does not have any antibacterial activity. Expressed by the skin dorsal glands.

The protein localises to the secreted. Antibacterial peptide, that adopts an alpha helical conformation which can disrupt bacterial membranes. Each caerin displays a different antimicrobial specificity. The polypeptide is Caerin-1.7 (Ranoidea xanthomera (Northern orange-eyed tree frog)).